A 317-amino-acid chain; its full sequence is MHNYLDFEKPISDLEGKIIELKKLATEDESIDTTDEIGRLEVRVREAIVEIYSKLNPWQKTQVARHPQRPHFVDYAKTLFQEFTPLAGDRKFSEDAAIQAGLARFRGQPVAVIGQEKGNDTKSRLKHNFGSPRPEGYRKAIRILEMADRFGLPVISLVDTAGAYPGVGAEERGQAEAIARSTEMCLGVKVPLVSVVIGEGGSGGAIAIATGNKVYMLEHSIYSVISPEGAASILWRDSTRAREAATNMKITAEDLKSLGVIDGIISEPLGGAHRDPDSVIAATGDVIASALAEMAPRSGEQLRNDRRQKFLAMGRNL.

The 254-residue stretch at 40-293 (LEVRVREAIV…GDVIASALAE (254 aa)) folds into the CoA carboxyltransferase C-terminal domain.

The protein belongs to the AccA family. As to quaternary structure, acetyl-CoA carboxylase is a heterohexamer composed of biotin carboxyl carrier protein (AccB), biotin carboxylase (AccC) and two subunits each of ACCase subunit alpha (AccA) and ACCase subunit beta (AccD).

The protein resides in the cytoplasm. The catalysed reaction is N(6)-carboxybiotinyl-L-lysyl-[protein] + acetyl-CoA = N(6)-biotinyl-L-lysyl-[protein] + malonyl-CoA. It functions in the pathway lipid metabolism; malonyl-CoA biosynthesis; malonyl-CoA from acetyl-CoA: step 1/1. Its function is as follows. Component of the acetyl coenzyme A carboxylase (ACC) complex. First, biotin carboxylase catalyzes the carboxylation of biotin on its carrier protein (BCCP) and then the CO(2) group is transferred by the carboxyltransferase to acetyl-CoA to form malonyl-CoA. In Rhizobium johnstonii (strain DSM 114642 / LMG 32736 / 3841) (Rhizobium leguminosarum bv. viciae), this protein is Acetyl-coenzyme A carboxylase carboxyl transferase subunit alpha.